The sequence spans 405 residues: SPbeta prophage-derived uncharacterized protein YonJ (405 aa).

A coiled-coil region spans residues 72 to 101 (DESNNSLLELELKKVEIMEERKKLQAVKHE).

This chain is SPbeta prophage-derived uncharacterized protein YonJ (yonJ), found in Bacillus subtilis (strain 168).